The chain runs to 162 residues: Phosphopantetheine adenylyltransferase (162 aa).

S11 is a substrate binding site. ATP is bound by residues 11-12 (SF) and H19. 3 residues coordinate substrate: K43, T75, and R89. Residues 90-92 (GLR), E100, and 125-131 (YAFLSSS) contribute to the ATP site.

The protein belongs to the bacterial CoaD family. In terms of assembly, homohexamer. Requires Mg(2+) as cofactor.

It is found in the cytoplasm. The enzyme catalyses (R)-4'-phosphopantetheine + ATP + H(+) = 3'-dephospho-CoA + diphosphate. It functions in the pathway cofactor biosynthesis; coenzyme A biosynthesis; CoA from (R)-pantothenate: step 4/5. Functionally, reversibly transfers an adenylyl group from ATP to 4'-phosphopantetheine, yielding dephospho-CoA (dPCoA) and pyrophosphate. In Finegoldia magna (strain ATCC 29328 / DSM 20472 / WAL 2508) (Peptostreptococcus magnus), this protein is Phosphopantetheine adenylyltransferase.